The chain runs to 553 residues: Glutamate--tRNA ligase (553 aa).

Residues 98–108 (PNPSGPLHIGH) carry the 'HIGH' region motif.

Belongs to the class-I aminoacyl-tRNA synthetase family. Glutamate--tRNA ligase type 2 subfamily.

The protein resides in the cytoplasm. The enzyme catalyses tRNA(Glu) + L-glutamate + ATP = L-glutamyl-tRNA(Glu) + AMP + diphosphate. Its function is as follows. Catalyzes the attachment of glutamate to tRNA(Glu) in a two-step reaction: glutamate is first activated by ATP to form Glu-AMP and then transferred to the acceptor end of tRNA(Glu). The chain is Glutamate--tRNA ligase from Methanocaldococcus jannaschii (strain ATCC 43067 / DSM 2661 / JAL-1 / JCM 10045 / NBRC 100440) (Methanococcus jannaschii).